The sequence spans 429 residues: Protein cereblon (429 aa).

Positions 1–30 (MGNHLPLLPAESEEEDEMEVEDQDSKEAKK) are disordered. The segment covering 11 to 22 (ESEEEDEMEVED) has biased composition (acidic residues). S12 bears the Phosphoserine mark. The 239-residue stretch at 68 to 306 (IPVLPQVMMI…CELDIMNKCT (239 aa)) folds into the Lon N-terminal domain. The CULT domain maps to 305–413 (CTSLCCKQCQ…LTRSALLPTI (109 aa)). The Zn(2+) site is built by C310 and C313. H365, W367, and W373 together coordinate (S)-thalidomide. The Zn(2+) site is built by C378 and C381.

The protein belongs to the CRBN family. As to quaternary structure, component of a DCX (DDB1-CUL4-X-box) protein ligase complex, at least composed of CRBN, CUL4A, DDB1 and RBX1. Interacts directly with DDB1. Interacts with KCNT1. Interacts with ILF2. Interacts with TRAF6 and ECSIT. Ubiquitinated, ubiquitination is mediated by its own DCX protein ligase complex.

The protein resides in the cytoplasm. It localises to the nucleus. The protein localises to the membrane. The protein operates within protein modification; protein ubiquitination. Substrate recognition component of a DCX (DDB1-CUL4-X-box) E3 protein ligase complex that mediates the ubiquitination and subsequent proteasomal degradation of target proteins, such as MEIS2, ILF2 or GLUL. Normal degradation of key regulatory proteins is required for normal limb outgrowth and expression of the fibroblast growth factor FGF8. Maintains presynaptic glutamate release and consequently cognitive functions, such as memory and learning, by negatively regulating large-conductance calcium-activated potassium (BK) channels in excitatory neurons. Likely to function by regulating the assembly and neuronal surface expression of BK channels via its interaction with KCNT1. May also be involved in regulating anxiety-like behaviors via a BK channel-independent mechanism. Plays a negative role in TLR4 signaling by interacting with TRAF6 and ECSIT, leading to inhibition of ECSIT ubiquitination, an important step of the signaling. The protein is Protein cereblon (CRBN) of Pongo abelii (Sumatran orangutan).